Consider the following 158-residue polypeptide: Snaclec stejaggregin-A subunit alpha (158 aa).

An N-terminal signal peptide occupies residues 1-23; that stretch reads MGRFISVSFGLLVVFLSLSGTGA. Cystine bridges form between Cys27–Cys38, Cys55–Cys152, and Cys127–Cys144. Residues 34–153 enclose the C-type lectin domain; it reads YDWYCYKPFN…CQAKNPFVCK (120 aa).

This sequence belongs to the snaclec family. In terms of assembly, heteromultimer; disulfide-linked. In terms of tissue distribution, expressed by the venom gland.

The protein localises to the secreted. Functionally, interferes with one step of hemostasis (modulation of platelet aggregation, or coagulation cascade, for example). This Trimeresurus stejnegeri (Chinese green tree viper) protein is Snaclec stejaggregin-A subunit alpha.